The following is a 561-amino-acid chain: Dihydroxy-acid dehydratase (561 aa).

Cys50 contacts [2Fe-2S] cluster. Asp82 is a Mg(2+) binding site. Cys123 serves as a coordination point for [2Fe-2S] cluster. Asp124 and Lys125 together coordinate Mg(2+). Lys125 carries the post-translational modification N6-carboxylysine. Residue Cys195 participates in [2Fe-2S] cluster binding. Glu447 is a Mg(2+) binding site. Residue Ser473 is the Proton acceptor of the active site.

It belongs to the IlvD/Edd family. As to quaternary structure, homodimer. Requires [2Fe-2S] cluster as cofactor. Mg(2+) serves as cofactor.

It carries out the reaction (2R)-2,3-dihydroxy-3-methylbutanoate = 3-methyl-2-oxobutanoate + H2O. The catalysed reaction is (2R,3R)-2,3-dihydroxy-3-methylpentanoate = (S)-3-methyl-2-oxopentanoate + H2O. It participates in amino-acid biosynthesis; L-isoleucine biosynthesis; L-isoleucine from 2-oxobutanoate: step 3/4. The protein operates within amino-acid biosynthesis; L-valine biosynthesis; L-valine from pyruvate: step 3/4. Functions in the biosynthesis of branched-chain amino acids. Catalyzes the dehydration of (2R,3R)-2,3-dihydroxy-3-methylpentanoate (2,3-dihydroxy-3-methylvalerate) into 2-oxo-3-methylpentanoate (2-oxo-3-methylvalerate) and of (2R)-2,3-dihydroxy-3-methylbutanoate (2,3-dihydroxyisovalerate) into 2-oxo-3-methylbutanoate (2-oxoisovalerate), the penultimate precursor to L-isoleucine and L-valine, respectively. This Chloroflexus aurantiacus (strain ATCC 29366 / DSM 635 / J-10-fl) protein is Dihydroxy-acid dehydratase.